A 199-amino-acid polypeptide reads, in one-letter code: Probable thymidylate kinase (199 aa).

9-16 serves as a coordination point for ATP; it reads GIDGCGKT.

This sequence belongs to the thymidylate kinase family.

It carries out the reaction dTMP + ATP = dTDP + ADP. The polypeptide is Probable thymidylate kinase (Methanococcus maripaludis (strain DSM 14266 / JCM 13030 / NBRC 101832 / S2 / LL)).